The primary structure comprises 147 residues: Secreted hemophore CSA2 (147 aa).

An N-terminal signal peptide occupies residues 1–20 (MKFSTILAIPFAIAFANAAA). The 112-residue stretch at 34-145 (NPYTIYPPVP…SALDAAATAT (112 aa)) folds into the CFEM domain. 4 disulfides stabilise this stretch: Cys62/Cys102, Cys66/Cys97, Cys76/Cys83, and Cys85/Cys118. Asp80 serves as a coordination point for heme.

It belongs to the RBT5 family. Homodimer. The possibility of a transient honotrimer assembly of the holo protein is not ruled out.

It is found in the secreted. Functionally, secreted heme-binding protein involved in the utilization of iron from human hemoglobin during hyphal growth. May also play a role in non-hemoglobin iron utilization. Heme transfer occurs between PGA7, RBT5 and CSA2 supporting a model in which the 3 CFEM proteins cooperate in a heme-acquisition system and form a cross-cell wall heme-transfer cascade. The ability to acquire iron from host tissues is a major virulence factor of pathogenic microorganisms. The sequence is that of Secreted hemophore CSA2 (CSA2) from Candida albicans (strain SC5314 / ATCC MYA-2876) (Yeast).